Here is a 437-residue protein sequence, read N- to C-terminus: UPF0597 protein Shal_0864 (437 aa).

Belongs to the UPF0597 family.

The protein is UPF0597 protein Shal_0864 of Shewanella halifaxensis (strain HAW-EB4).